A 153-amino-acid polypeptide reads, in one-letter code: MAL-like protein (153 aa).

4 helical membrane-spanning segments follow: residues 22-42, 59-79, 97-117, and 131-151; these read LFLT…FLVW, VMYV…SYLF, GTTG…TIVS, and AASF…FSIY. Residues 22 to 153 enclose the MARVEL domain; the sequence is LFLTIPFAFF…ILHAFSIYYH (132 aa).

It belongs to the MAL family.

The protein resides in the membrane. In Homo sapiens (Human), this protein is MAL-like protein (MALL).